The sequence spans 194 residues: Holliday junction branch migration complex subunit RuvA (194 aa).

The tract at residues 1-64 (MISRLTGKLV…EDAHLLFGFA (64 aa)) is domain I. The interval 65 to 143 (TAEERKTFRQ…AHTVTDGLFA (79 aa)) is domain II. Residues 144–147 (AAPA) form a flexible linker region. The segment at 147–194 (AADETEDIVSTLLALGYSEREAKAAVKGVPEGTDVGEGVRLALKNLLK) is domain III.

It belongs to the RuvA family. Homotetramer. Forms an RuvA(8)-RuvB(12)-Holliday junction (HJ) complex. HJ DNA is sandwiched between 2 RuvA tetramers; dsDNA enters through RuvA and exits via RuvB. An RuvB hexamer assembles on each DNA strand where it exits the tetramer. Each RuvB hexamer is contacted by two RuvA subunits (via domain III) on 2 adjacent RuvB subunits; this complex drives branch migration. In the full resolvosome a probable DNA-RuvA(4)-RuvB(12)-RuvC(2) complex forms which resolves the HJ.

It is found in the cytoplasm. In terms of biological role, the RuvA-RuvB-RuvC complex processes Holliday junction (HJ) DNA during genetic recombination and DNA repair, while the RuvA-RuvB complex plays an important role in the rescue of blocked DNA replication forks via replication fork reversal (RFR). RuvA specifically binds to HJ cruciform DNA, conferring on it an open structure. The RuvB hexamer acts as an ATP-dependent pump, pulling dsDNA into and through the RuvAB complex. HJ branch migration allows RuvC to scan DNA until it finds its consensus sequence, where it cleaves and resolves the cruciform DNA. The polypeptide is Holliday junction branch migration complex subunit RuvA (Neisseria meningitidis serogroup C (strain 053442)).